The chain runs to 330 residues: Putative UV-damage endonuclease (330 aa).

It belongs to the uve1/UvsE family.

The protein localises to the virion. Its function is as follows. Endonuclease for the repair of UV-irradiated DNA. The polypeptide is Putative UV-damage endonuclease (Acanthamoeba polyphaga mimivirus (APMV)).